A 475-amino-acid polypeptide reads, in one-letter code: Ribulose bisphosphate carboxylase large chain (475 aa).

Positions 1–2 are excised as a propeptide; that stretch reads MS. At Pro-3 the chain carries N-acetylproline. Lys-14 carries the post-translational modification N6,N6,N6-trimethyllysine. Residues Asn-123 and Thr-173 each coordinate substrate. The active-site Proton acceptor is Lys-175. Lys-177 provides a ligand contact to substrate. Mg(2+)-binding residues include Lys-201, Asp-203, and Glu-204. Lys-201 carries the post-translational modification N6-carboxylysine. His-294 (proton acceptor) is an active-site residue. The substrate site is built by Arg-295, His-327, and Ser-379.

The protein belongs to the RuBisCO large chain family. Type I subfamily. Heterohexadecamer of 8 large chains and 8 small chains; disulfide-linked. The disulfide link is formed within the large subunit homodimers. Mg(2+) is required as a cofactor. Post-translationally, the disulfide bond which can form in the large chain dimeric partners within the hexadecamer appears to be associated with oxidative stress and protein turnover.

It is found in the plastid. Its subcellular location is the chloroplast. It catalyses the reaction 2 (2R)-3-phosphoglycerate + 2 H(+) = D-ribulose 1,5-bisphosphate + CO2 + H2O. The enzyme catalyses D-ribulose 1,5-bisphosphate + O2 = 2-phosphoglycolate + (2R)-3-phosphoglycerate + 2 H(+). RuBisCO catalyzes two reactions: the carboxylation of D-ribulose 1,5-bisphosphate, the primary event in carbon dioxide fixation, as well as the oxidative fragmentation of the pentose substrate in the photorespiration process. Both reactions occur simultaneously and in competition at the same active site. This Keteleeria davidiana (David's keteleeria) protein is Ribulose bisphosphate carboxylase large chain.